Reading from the N-terminus, the 155-residue chain is Protein-export protein SecB 1 (155 aa).

Belongs to the SecB family. As to quaternary structure, homotetramer, a dimer of dimers. One homotetramer interacts with 1 SecA dimer.

The protein localises to the cytoplasm. In terms of biological role, one of the proteins required for the normal export of preproteins out of the cell cytoplasm. It is a molecular chaperone that binds to a subset of precursor proteins, maintaining them in a translocation-competent state. It also specifically binds to its receptor SecA. This is Protein-export protein SecB 1 from Polaromonas naphthalenivorans (strain CJ2).